The following is a 217-amino-acid chain: Probable GTP-binding protein EngB (217 aa).

The 185-residue stretch at G29–I213 folds into the EngB-type G domain. Residues G37–S44, G64–E68, D91–G94, T158–D161, and T192–S194 each bind GTP. Residues S44 and T66 each contribute to the Mg(2+) site.

It belongs to the TRAFAC class TrmE-Era-EngA-EngB-Septin-like GTPase superfamily. EngB GTPase family. The cofactor is Mg(2+).

Its function is as follows. Necessary for normal cell division and for the maintenance of normal septation. This chain is Probable GTP-binding protein EngB, found in Rhizobium johnstonii (strain DSM 114642 / LMG 32736 / 3841) (Rhizobium leguminosarum bv. viciae).